The chain runs to 469 residues: L-seryl-tRNA(Sec) selenium transferase (469 aa).

The residue at position 295 (lysine 295) is an N6-(pyridoxal phosphate)lysine.

This sequence belongs to the SelA family. Requires pyridoxal 5'-phosphate as cofactor.

It localises to the cytoplasm. The enzyme catalyses L-seryl-tRNA(Sec) + selenophosphate + H(+) = L-selenocysteinyl-tRNA(Sec) + phosphate. The protein operates within aminoacyl-tRNA biosynthesis; selenocysteinyl-tRNA(Sec) biosynthesis; selenocysteinyl-tRNA(Sec) from L-seryl-tRNA(Sec) (bacterial route): step 1/1. In terms of biological role, converts seryl-tRNA(Sec) to selenocysteinyl-tRNA(Sec) required for selenoprotein biosynthesis. This Methylocella silvestris (strain DSM 15510 / CIP 108128 / LMG 27833 / NCIMB 13906 / BL2) protein is L-seryl-tRNA(Sec) selenium transferase.